The following is a 309-amino-acid chain: Methionyl-tRNA formyltransferase (309 aa).

(6S)-5,6,7,8-tetrahydrofolate is bound at residue 109 to 112 (SLLP).

It belongs to the Fmt family.

It carries out the reaction L-methionyl-tRNA(fMet) + (6R)-10-formyltetrahydrofolate = N-formyl-L-methionyl-tRNA(fMet) + (6S)-5,6,7,8-tetrahydrofolate + H(+). Its function is as follows. Attaches a formyl group to the free amino group of methionyl-tRNA(fMet). The formyl group appears to play a dual role in the initiator identity of N-formylmethionyl-tRNA by promoting its recognition by IF2 and preventing the misappropriation of this tRNA by the elongation apparatus. The chain is Methionyl-tRNA formyltransferase from Thiobacillus denitrificans (strain ATCC 25259 / T1).